A 304-amino-acid polypeptide reads, in one-letter code: Small glutamine-rich tetratricopeptide repeat-containing protein beta (304 aa).

TPR repeat units lie at residues 15-49 (LREQ…SPED), 85-118 (ADQL…DPNN), 120-152 (VYYC…DSKY), and 153-186 (SKAY…DPEN). Lysine 131 carries the N6-acetyllysine modification. 3 positions are modified to phosphoserine: serine 293, serine 295, and serine 297.

Belongs to the SGT family. Homooligomerize. In terms of tissue distribution, expressed specifically in brain.

Its function is as follows. Co-chaperone that binds directly to HSC70 and HSP70 and regulates their ATPase activity. This chain is Small glutamine-rich tetratricopeptide repeat-containing protein beta (Sgtb), found in Rattus norvegicus (Rat).